The sequence spans 230 residues: MAATETPGAAQKRVLRVLALHGYRQNERSFWERTGALRKRLRGRADLITFSAPLLVPDPDAEPGAGDPDSLQDESRGWWFSNPEQNSFDAMEESKTCSGLEAPLDTVAKAFSELGPFDGILGFSQGAALVAIICALKQQGDPRFHFDFAILVAGFKSLSTDHAKHYQQPITVPSLHVIGETDRVISAAMSQELVSHFENPVILMHSGGHYVPACAPQKKVYWEFLDKFLT.

Catalysis depends on charge relay system residues serine 124, aspartate 182, and histidine 209.

It belongs to the LovG family.

The enzyme catalyses a carboxylic ester + H2O = an alcohol + a carboxylate + H(+). Exhibits ester hydrolase activity with a strong preference for long-chain alkyl ester substrates and high selectivity against a variety of short, branched, and substituted esters. Is able to hydrolyze ester bonds within a wide range of p-nitrophenyl derivatives (C2-C14) in vitro, with a strong preference toward substrates of &gt;8 carbons. The polypeptide is Esterase OVCA2 (ovca2) (Xenopus tropicalis (Western clawed frog)).